A 926-amino-acid chain; its full sequence is Serine/threonine-protein kinase/endoribonuclease IRE2 (926 aa).

The N-terminal stretch at 1 to 34 is a signal peptide; it reads MASAVRGSRPWPRLGLQLQFAALLLGTLSPQVHT. Topologically, residues 35-430 are lumenal; sequence LRPENLLLVS…TPDSYLGLGP (396 aa). Residues 431–451 traverse the membrane as a helical segment; sequence QDLLAASLTAVLLGGWILFVM. Residues 452 to 926 are Cytoplasmic-facing; sequence RQQQPQVVEK…RRPCPGATGR (475 aa). The span at 478–501 shows a compositional bias: polar residues; it reads DAQSLHSGASRRSQKRLQSPSKQA. The interval 478-509 is disordered; sequence DAQSLHSGASRRSQKRLQSPSKQAQPLDDPEA. Residues 520–781 form the Protein kinase domain; that stretch reads FNPKDVLGRG…APQVLAHPFF (262 aa). ATP-binding positions include 526-534 and K548; that span reads LGRGAGGTF. Residue D637 is the Proton acceptor of the active site. Residues 784–912 form the KEN domain; it reads RAKQLQFFQD…ESLFLPYYPP (129 aa).

This sequence belongs to the protein kinase superfamily. Ser/Thr protein kinase family. The cofactor is Mg(2+). Post-translationally, autophosphorylated.

Its subcellular location is the endoplasmic reticulum membrane. It catalyses the reaction L-seryl-[protein] + ATP = O-phospho-L-seryl-[protein] + ADP + H(+). It carries out the reaction L-threonyl-[protein] + ATP = O-phospho-L-threonyl-[protein] + ADP + H(+). The kinase domain is activated by trans-autophosphorylation. Kinase activity is required for activation of the endoribonuclease domain. In terms of biological role, induces translational repression through 28S ribosomal RNA cleavage in response to ER stress. Pro-apoptotic. Appears to play no role in the unfolded-protein response, unlike closely related proteins. The sequence is that of Serine/threonine-protein kinase/endoribonuclease IRE2 from Homo sapiens (Human).